The following is a 418-amino-acid chain: Voltage-gated ClC-type chloride channel ClcB (418 aa).

Topologically, residues 1-4 are cytoplasmic; sequence MFRR. A helical membrane pass occupies residues 5-25; it reads LLIATIVGILAAFAVAGFRHA. Residues 26-53 are Periplasmic-facing; it reads MLLLEWLFLNNDSGSLVNAATNLSPWRR. Residues 54 to 74 form a helical membrane-spanning segment; that stretch reads LLTPALGGLAAGLLLMGWQKF. The Cytoplasmic segment spans residues 75-145; it reads TQQRPHAPTD…QRFTPRQEWK (71 aa). The helical transmembrane segment at 146–166 threads the bilayer; that stretch reads LWIACGAAAGMAAAYRAPLAG. Over 167–177 the chain is Periplasmic; that stretch reads SLFIAEVLFGT. The helical transmembrane segment at 178-200 threads the bilayer; it reads MMLASLGPVIISAVVALLISNLI. Topologically, residues 201 to 221 are cytoplasmic; that stretch reads NHSDALLYSVQLSVTVQARDY. The chain crosses the membrane as a helical span at residues 222–242; the sequence is ALIISTGVLAGLCGPLLLTLM. Residues 243–257 are Periplasmic-facing; that stretch reads NACHRGFVSLKLAPP. Residues 258–278 form a helical membrane-spanning segment; the sequence is WQLALGGLIVGLLSLFTPAVW. Residues 279 to 290 are Cytoplasmic-facing; it reads GNGYSTVQSFLT. A helical transmembrane segment spans residues 291–311; sequence APPLLMIIAGIFLCKLCAVLA. The Periplasmic portion of the chain corresponds to 312–315; sequence SSGS. Residues 316–336 traverse the membrane as a helical segment; it reads GAPGGVFTPTLFIGLAIGMLY. Topologically, residues 337–351 are cytoplasmic; sequence GRSLGLWLPDGEEIT. The chain crosses the membrane as a helical span at residues 352–372; the sequence is LLLGLTGMATLLAATTHAPIM. The Periplasmic segment spans residues 373–379; it reads STLMICE. Residues 380-400 form a helical membrane-spanning segment; the sequence is MTGEYQLLPGLLIACVIASVI. Topologically, residues 401–418 are cytoplasmic; that stretch reads SRTLHRDSIYRQHTAKHS.

This sequence belongs to the chloride channel (TC 2.A.49) family. ClcB subfamily.

It localises to the cell inner membrane. In terms of biological role, probably acts as an electrical shunt for an outwardly-directed proton pump that is linked to amino acid decarboxylation, as part of the extreme acid resistance (XAR) response. This chain is Voltage-gated ClC-type chloride channel ClcB (clcB), found in Escherichia coli O6:H1 (strain CFT073 / ATCC 700928 / UPEC).